Here is a 479-residue protein sequence, read N- to C-terminus: Dihydrolipoyl dehydrogenase, mitochondrial (479 aa).

A mitochondrion-targeting transit peptide spans 1–19 (FNRXSPGLQGVSSVPLRTY). N6-acetyllysine; alternate is present on K50. K50 carries the N6-succinyllysine; alternate modification. FAD contacts are provided by residues 55–64 (EKNETLGGTC) and K73. C64 and C69 are joined by a disulfide. Residues K88, K106, K116, and K127 each carry the N6-acetyllysine; alternate modification. N6-succinyllysine; alternate is present on residues K88, K106, K116, and K127. G138 provides a ligand contact to FAD. K143 and K150 each carry N6-succinyllysine. Position 167 to 169 (167 to 169 (TGS)) interacts with FAD. NAD(+) is bound by residues 204–211 (GAGVIGVE) and E227. K257 and K261 each carry N6-succinyllysine. V262 serves as a coordination point for NAD(+). Position 269 is a phosphoserine (S269). G298 contributes to the NAD(+) binding site. Residue K330 is modified to N6-acetyllysine. Residues D339 and 345–348 (MLAH) each bind FAD. K394 carries the post-translational modification N6-acetyllysine; alternate. N6-succinyllysine; alternate is present on K394. An N6-acetyllysine mark is found at K401 and K404. Position 414 is an N6-succinyllysine (K414). H471 acts as the Proton acceptor in catalysis.

This sequence belongs to the class-I pyridine nucleotide-disulfide oxidoreductase family. Homodimer. Part of the multimeric pyruvate dehydrogenase complex that contains multiple copies of pyruvate dehydrogenase (subunits PDHA (PDHA1 or PDHA2) and PDHB, E1), dihydrolipoamide acetyltransferase (DLAT, E2) and lipoamide dehydrogenase (DLD, E3). These subunits are bound to an inner core composed of about 48 DLAT and 12 PDHX molecules (by non covalent bonds). The 2-oxoglutarate dehydrogenase complex is composed of OGDH (2-oxoglutarate dehydrogenase; E1), DLST (dihydrolipoamide succinyltransferase; E2) and DLD (dihydrolipoamide dehydrogenase; E3). It contains multiple copies of the three enzymatic components (E1, E2 and E3). In the nucleus, the 2-oxoglutarate dehydrogenase complex associates with KAT2A. Interacts with PDHX. The cofactor is FAD. Tyrosine phosphorylated. As to expression, expressed in testis (at protein level).

The protein resides in the mitochondrion matrix. It is found in the nucleus. The protein localises to the cell projection. Its subcellular location is the cilium. It localises to the flagellum. The protein resides in the cytoplasmic vesicle. It is found in the secretory vesicle. The protein localises to the acrosome. It catalyses the reaction N(6)-[(R)-dihydrolipoyl]-L-lysyl-[protein] + NAD(+) = N(6)-[(R)-lipoyl]-L-lysyl-[protein] + NADH + H(+). Lipoamide dehydrogenase is a component of the glycine cleavage system as well as an E3 component of three alpha-ketoacid dehydrogenase complexes (pyruvate-, alpha-ketoglutarate-, and branched-chain amino acid-dehydrogenase complex). The 2-oxoglutarate dehydrogenase complex is mainly active in the mitochondrion. A fraction of the 2-oxoglutarate dehydrogenase complex also localizes in the nucleus and is required for lysine succinylation of histones: associates with KAT2A on chromatin and provides succinyl-CoA to histone succinyltransferase KAT2A. In monomeric form may have additional moonlighting function as serine protease. Involved in the hyperactivation of spermatazoa during capacitation and in the spermatazoal acrosome reaction. This is Dihydrolipoyl dehydrogenase, mitochondrial (DLD) from Mesocricetus auratus (Golden hamster).